A 186-amino-acid chain; its full sequence is MSRLSIFPDGSTSMDQSSPTPLLVTETPAEIQAELARRGIGFEQWPALQELPLAADQSWILKAYANEIDRVKRDGGYATVDAIRMTPDHPERVALRSKFLAEHTHAEDEVRFFVEGRGLFCLHLGAEVLLTLCERGDLIRVPAGTKHWFDMGGQPAFCAVRWFNNAVGWVATFTGNTISERFPTLD.

Residues methionine 1–proline 21 are disordered. Residues glycine 10 to threonine 20 show a composition bias toward polar residues. Histidine 103, histidine 105, glutamate 109, and histidine 147 together coordinate Fe(2+). The Ni(2+) site is built by histidine 103, histidine 105, glutamate 109, and histidine 147.

Belongs to the acireductone dioxygenase (ARD) family. In terms of assembly, monomer. It depends on Fe(2+) as a cofactor. The cofactor is Ni(2+).

The catalysed reaction is 1,2-dihydroxy-5-(methylsulfanyl)pent-1-en-3-one + O2 = 3-(methylsulfanyl)propanoate + CO + formate + 2 H(+). It catalyses the reaction 1,2-dihydroxy-5-(methylsulfanyl)pent-1-en-3-one + O2 = 4-methylsulfanyl-2-oxobutanoate + formate + 2 H(+). It functions in the pathway amino-acid biosynthesis; L-methionine biosynthesis via salvage pathway; L-methionine from S-methyl-5-thio-alpha-D-ribose 1-phosphate: step 5/6. In terms of biological role, catalyzes 2 different reactions between oxygen and the acireductone 1,2-dihydroxy-3-keto-5-methylthiopentene (DHK-MTPene) depending upon the metal bound in the active site. Fe-containing acireductone dioxygenase (Fe-ARD) produces formate and 2-keto-4-methylthiobutyrate (KMTB), the alpha-ketoacid precursor of methionine in the methionine recycle pathway. Ni-containing acireductone dioxygenase (Ni-ARD) produces methylthiopropionate, carbon monoxide and formate, and does not lie on the methionine recycle pathway. In Synechococcus sp. (strain CC9902), this protein is Acireductone dioxygenase.